Here is a 327-residue protein sequence, read N- to C-terminus: Methionyl-tRNA formyltransferase (327 aa).

A (6S)-5,6,7,8-tetrahydrofolate-binding site is contributed by 121–124 (SLLP).

Belongs to the Fmt family.

It carries out the reaction L-methionyl-tRNA(fMet) + (6R)-10-formyltetrahydrofolate = N-formyl-L-methionyl-tRNA(fMet) + (6S)-5,6,7,8-tetrahydrofolate + H(+). Attaches a formyl group to the free amino group of methionyl-tRNA(fMet). The formyl group appears to play a dual role in the initiator identity of N-formylmethionyl-tRNA by promoting its recognition by IF2 and preventing the misappropriation of this tRNA by the elongation apparatus. The chain is Methionyl-tRNA formyltransferase from Burkholderia pseudomallei (strain K96243).